We begin with the raw amino-acid sequence, 155 residues long: Ribosome maturation factor RimP (155 aa).

The protein belongs to the RimP family.

It localises to the cytoplasm. Its function is as follows. Required for maturation of 30S ribosomal subunits. The polypeptide is Ribosome maturation factor RimP (Synechococcus sp. (strain WH7803)).